The chain runs to 255 residues: tRNA (guanine-N(1)-)-methyltransferase (255 aa).

Residues Gly117 and 137 to 142 contribute to the S-adenosyl-L-methionine site; that span reads IGDYVL.

It belongs to the RNA methyltransferase TrmD family. In terms of assembly, homodimer.

Its subcellular location is the cytoplasm. The enzyme catalyses guanosine(37) in tRNA + S-adenosyl-L-methionine = N(1)-methylguanosine(37) in tRNA + S-adenosyl-L-homocysteine + H(+). In terms of biological role, specifically methylates guanosine-37 in various tRNAs. This Chromobacterium violaceum (strain ATCC 12472 / DSM 30191 / JCM 1249 / CCUG 213 / NBRC 12614 / NCIMB 9131 / NCTC 9757 / MK) protein is tRNA (guanine-N(1)-)-methyltransferase.